The sequence spans 237 residues: Demethylmenaquinone methyltransferase (237 aa).

Residues threonine 58, aspartate 79, and asparagine 106–alanine 107 each bind S-adenosyl-L-methionine.

It belongs to the class I-like SAM-binding methyltransferase superfamily. MenG/UbiE family.

It catalyses the reaction a 2-demethylmenaquinol + S-adenosyl-L-methionine = a menaquinol + S-adenosyl-L-homocysteine + H(+). It participates in quinol/quinone metabolism; menaquinone biosynthesis; menaquinol from 1,4-dihydroxy-2-naphthoate: step 2/2. Its function is as follows. Methyltransferase required for the conversion of demethylmenaquinol (DMKH2) to menaquinol (MKH2). The sequence is that of Demethylmenaquinone methyltransferase from Bacillus anthracis (strain A0248).